Reading from the N-terminus, the 137-residue chain is MMKGSRRTGNNTATTLNTPVVIHATQLPQHVSTDEVLQFLESFIDEKENIIDSTTMNTISGNAADADAAAVANTSLNIDTNLSSSISQLKRIQRDFKGLPPAQDFSAAPIQVSTTEKKETSIGVSATGGKKTTFADE.

The segment at 100-137 (PPAQDFSAAPIQVSTTEKKETSIGVSATGGKKTTFADE) is disordered. Serine 121 carries the post-translational modification Phosphoserine.

Component of the RNA polymerase I (Pol I) complex consisting of 14 subunits: RPA135, RPA190, RPC40, RPA14, RPB5, RPO26, RPA43, RPB8, RPA12, RPB10, RPC19, RPC10, RPA49 and RPA34. The complex is composed of a horseshoe-shaped core containing ten subunits (RPA135, RPA190, RPB5, RPO26, RPB8, RPB10, RPC10, RPA12, RPC19 and RPC40) where RPA135 and RPA190 form the DNA-binding cleft. Outside of the core, RPA14 and RPA43 form the stalk that mediates interactions with transcription initiation factors and newly synthesized RNA. The N-terminus is blocked.

It localises to the nucleus. Its subcellular location is the nucleolus. Its function is as follows. DNA-dependent RNA polymerases catalyze the transcription of DNA into RNA using the four ribonucleoside triphosphates as substrates. Component of RNA polymerase I (Pol I) which synthesizes ribosomal RNA precursors. RPA14 seems to play a role in the stability of subunits RPO26 and RPA43. In vitro, the RPA14-RPA43 subcomplex binds single-stranded RNA. The chain is DNA-directed RNA polymerase I subunit RPA14 (RPA14) from Saccharomyces cerevisiae (strain ATCC 204508 / S288c) (Baker's yeast).